Here is a 379-residue protein sequence, read N- to C-terminus: Tryptophan 2,3-dioxygenase (379 aa).

Substrate-binding positions include 57–61 and R128; that span reads FIITH. H312 contacts heme. Substrate is bound at residue T327.

Belongs to the tryptophan 2,3-dioxygenase family. Homotetramer. Dimer of dimers. It depends on heme as a cofactor.

It carries out the reaction L-tryptophan + O2 = N-formyl-L-kynurenine. It functions in the pathway amino-acid degradation; L-tryptophan degradation via kynurenine pathway; L-kynurenine from L-tryptophan: step 1/2. Its pathway is pigment biosynthesis; ommochrome biosynthesis. Functionally, heme-dependent dioxygenase that catalyzes the oxidative cleavage of the L-tryptophan (L-Trp) pyrrole ring and converts L-tryptophan to N-formyl-L-kynurenine. Catalyzes the oxidative cleavage of the indole moiety. Required during larval growth to control the level of potentially harmful free tryptophan in the hemolymph. In the adult the same reaction is the first step in the ommochrome biosynthetic pathway. The chain is Tryptophan 2,3-dioxygenase from Drosophila melanogaster (Fruit fly).